We begin with the raw amino-acid sequence, 190 residues long: Casparian strip membrane protein 1 (190 aa).

Residues 1–24 (MKAESGSADAKLPLPPPVGRKRRG) are Cytoplasmic-facing. Residues 25 to 45 (LAILDFLLRLLAIGATLSAAI) traverse the membrane as a helical segment. Residues 46-72 (AMGTNNETLKFFTQFFQFNARFYNLSA) lie on the Extracellular side of the membrane. Asn51 and Asn69 each carry an N-linked (GlcNAc...) asparagine glycan. Residues 73–93 (FIYFVIANATVGLYLLLSLPF) form a helical membrane-spanning segment. The Cytoplasmic segment spans residues 94–107 (SIFDIVRPRAAAFR). The helical transmembrane segment at 108 to 128 (VLLIFFDTVMVAVCTSGAAAA) threads the bilayer. The Extracellular portion of the chain corresponds to 129 to 157 (TAIMYVARRGNTKTNWFSICQQFNSFCDQ). The chain crosses the membrane as a helical span at residues 158–178 (ATGALGASFAAVVLLILLVLL). Residues 179 to 190 (SASTLHRQRADF) are Cytoplasmic-facing.

Belongs to the Casparian strip membrane proteins (CASP) family. In terms of assembly, homodimer and heterodimers.

The protein resides in the cell membrane. Regulates membrane-cell wall junctions and localized cell wall deposition. Required for establishment of the Casparian strip membrane domain (CSD) and the subsequent formation of Casparian strips, a cell wall modification of the root endodermis that determines an apoplastic barrier between the intraorganismal apoplasm and the extraorganismal apoplasm and prevents lateral diffusion. In Pinus taeda (Loblolly pine), this protein is Casparian strip membrane protein 1.